The chain runs to 316 residues: Pantothenate kinase (316 aa).

95–102 contacts ATP; it reads GSVAVGKS.

It belongs to the prokaryotic pantothenate kinase family.

The protein resides in the cytoplasm. It carries out the reaction (R)-pantothenate + ATP = (R)-4'-phosphopantothenate + ADP + H(+). It functions in the pathway cofactor biosynthesis; coenzyme A biosynthesis; CoA from (R)-pantothenate: step 1/5. The sequence is that of Pantothenate kinase from Escherichia coli O17:K52:H18 (strain UMN026 / ExPEC).